A 222-amino-acid polypeptide reads, in one-letter code: Octanoyltransferase (222 aa).

The BPL/LPL catalytic domain maps to 32 to 207 (RDRPDVLMLL…AFARVFGVQC (176 aa)). Substrate is bound by residues 72–79 (RGGEVTYH), 139–141 (ALG), and 152–154 (GFA). The Acyl-thioester intermediate role is filled by C170.

This sequence belongs to the LipB family.

It is found in the cytoplasm. The catalysed reaction is octanoyl-[ACP] + L-lysyl-[protein] = N(6)-octanoyl-L-lysyl-[protein] + holo-[ACP] + H(+). It functions in the pathway protein modification; protein lipoylation via endogenous pathway; protein N(6)-(lipoyl)lysine from octanoyl-[acyl-carrier-protein]: step 1/2. Its function is as follows. Catalyzes the transfer of endogenously produced octanoic acid from octanoyl-acyl-carrier-protein onto the lipoyl domains of lipoate-dependent enzymes. Lipoyl-ACP can also act as a substrate although octanoyl-ACP is likely to be the physiological substrate. In Gloeobacter violaceus (strain ATCC 29082 / PCC 7421), this protein is Octanoyltransferase.